The primary structure comprises 308 residues: tRNA dimethylallyltransferase (308 aa).

Residue 10–17 (GPTGVGKT) coordinates ATP. Residue 12–17 (TGVGKT) coordinates substrate. The tract at residues 35–38 (DSRQ) is interaction with substrate tRNA.

Belongs to the IPP transferase family. As to quaternary structure, monomer. It depends on Mg(2+) as a cofactor.

It catalyses the reaction adenosine(37) in tRNA + dimethylallyl diphosphate = N(6)-dimethylallyladenosine(37) in tRNA + diphosphate. Functionally, catalyzes the transfer of a dimethylallyl group onto the adenine at position 37 in tRNAs that read codons beginning with uridine, leading to the formation of N6-(dimethylallyl)adenosine (i(6)A). In Fervidobacterium nodosum (strain ATCC 35602 / DSM 5306 / Rt17-B1), this protein is tRNA dimethylallyltransferase.